A 237-amino-acid chain; its full sequence is Ribonuclease PH (237 aa).

Residues arginine 86 and 124–126 (GTR) contribute to the phosphate site.

It belongs to the RNase PH family. In terms of assembly, homohexameric ring arranged as a trimer of dimers.

The catalysed reaction is tRNA(n+1) + phosphate = tRNA(n) + a ribonucleoside 5'-diphosphate. In terms of biological role, phosphorolytic 3'-5' exoribonuclease that plays an important role in tRNA 3'-end maturation. Removes nucleotide residues following the 3'-CCA terminus of tRNAs; can also add nucleotides to the ends of RNA molecules by using nucleoside diphosphates as substrates, but this may not be physiologically important. Probably plays a role in initiation of 16S rRNA degradation (leading to ribosome degradation) during starvation. The protein is Ribonuclease PH of Methylorubrum populi (strain ATCC BAA-705 / NCIMB 13946 / BJ001) (Methylobacterium populi).